The following is a 481-amino-acid chain: Pre-mRNA-splicing factor sap114 (481 aa).

Residues 1–15 (MSSLMEFQDRNTTNN) are compositionally biased toward polar residues. The tract at residues 1 to 34 (MSSLMEFQDRNTTNNETEHQKSITDQSSSVPAGV) is disordered. SURP motif repeat units follow at residues 44-86 (IIDK…HPYY) and 147-189 (VLRL…YPYF). Disordered regions lie at residues 335–373 (PSLASPEKGGISSTTSVSPAAQASPVLSTTTQPKVQKPV) and 452–481 (GVEISQEEIERRKRAATQSAWGATPTNKRR). Polar residues-rich tracts occupy residues 345-368 (ISSTTSVSPAAQASPVLSTTTQPK) and 467-481 (ATQSAWGATPTNKRR).

As to quaternary structure, belongs to the 40S cdc5-associated complex (or cwf complex), a spliceosome sub-complex reminiscent of a late-stage spliceosome composed of the U2, U5 and U6 snRNAs and at least brr2, cdc5, cwf2/prp3, cwf3/syf1, cwf4/syf3, cwf5/ecm2, spp42/cwf6, cwf7/spf27, cwf8, cwf9, cwf10, cwf11, cwf12, prp45/cwf13, cwf14, cwf15, cwf16, cwf17, cwf18, cwf19, cwf20, cwf21, cwf22, cwf23, cwf24, cwf25, cwf26, cyp7/cwf27, cwf28, cwf29/ist3, lea1, msl1, prp5/cwf1, prp10, prp12/sap130, prp17, prp22, sap61, sap62, sap114, sap145, slu7, smb1, smd1, smd3, smf1, smg1 and syf2.

The protein localises to the nucleus. In terms of biological role, involved in pre-mRNA splicing. May be involved in endoplasmic reticulum-associated protein degradation (ERAD) and required for growth at low and high temperatures. In Schizosaccharomyces pombe (strain 972 / ATCC 24843) (Fission yeast), this protein is Pre-mRNA-splicing factor sap114 (sap114).